The following is a 457-amino-acid chain: MQKYTSEARQLLALRIPVILAQVAQTAMGFVDTVMAGGYSATDMAAVAIGTSIWLPAILFGHGLLLALTPVIAQLNGSGRRERIAHQVRQGFWLAGFVSVLVMIVLWNAGYIIRSMHNIDPALADKAVGYLRALLWGAPGYLFFQVARNQCEGLAKTKPGMVMGFLGLLVNIPVNYIFIYGHFGMPELGGIGCGVATAAVYWVMFIAMLSYIKHARSMRDIRNEKGFGKPDSVVMKRLIQLGLPIALALFFEVTLFAVVALLVSPLGIVDVAGHQIALNFSSLMFVLPMSLAAAVTIRVGYRLGQGSTLDAQTAARTGLGVGICMAVVTAIFTVTLRKHIALLYNDNPEVVALAAQLMLLAAVYQISDSIQVIGSGILRGYKDTRSIFFITFTAYWVLGLPSGYILALTDLVVDRMGPAGFWMGFIIGLTSAAVLMMLRMRYLQRQPSAIILQRAAR.

The Cytoplasmic portion of the chain corresponds to 1–15; that stretch reads MQKYTSEARQLLALR. A helical membrane pass occupies residues 16 to 36; the sequence is IPVILAQVAQTAMGFVDTVMA. Residues 37 to 52 lie on the Extracellular side of the membrane; sequence GGYSATDMAAVAIGTS. Residues 53–73 traverse the membrane as a helical segment; the sequence is IWLPAILFGHGLLLALTPVIA. At 74–92 the chain is on the cytoplasmic side; it reads QLNGSGRRERIAHQVRQGF. A helical transmembrane segment spans residues 93–113; it reads WLAGFVSVLVMIVLWNAGYII. The Extracellular portion of the chain corresponds to 114-126; it reads RSMHNIDPALADK. A helical membrane pass occupies residues 127–147; that stretch reads AVGYLRALLWGAPGYLFFQVA. Topologically, residues 148-159 are cytoplasmic; sequence RNQCEGLAKTKP. A helical membrane pass occupies residues 160–180; sequence GMVMGFLGLLVNIPVNYIFIY. Residues 181–187 are Extracellular-facing; that stretch reads GHFGMPE. Residues 188-208 traverse the membrane as a helical segment; sequence LGGIGCGVATAAVYWVMFIAM. Residues 209-242 are Cytoplasmic-facing; the sequence is LSYIKHARSMRDIRNEKGFGKPDSVVMKRLIQLG. A helical membrane pass occupies residues 243 to 263; that stretch reads LPIALALFFEVTLFAVVALLV. At 264 to 275 the chain is on the extracellular side; sequence SPLGIVDVAGHQ. The chain crosses the membrane as a helical span at residues 276-296; it reads IALNFSSLMFVLPMSLAAAVT. The Cytoplasmic portion of the chain corresponds to 297–313; that stretch reads IRVGYRLGQGSTLDAQT. Residues 314–334 traverse the membrane as a helical segment; the sequence is AARTGLGVGICMAVVTAIFTV. At 335–349 the chain is on the extracellular side; that stretch reads TLRKHIALLYNDNPE. Residues 350 to 370 form a helical membrane-spanning segment; that stretch reads VVALAAQLMLLAAVYQISDSI. Residues 371 to 386 are Cytoplasmic-facing; that stretch reads QVIGSGILRGYKDTRS. The helical transmembrane segment at 387–407 threads the bilayer; it reads IFFITFTAYWVLGLPSGYILA. Residues 408-417 lie on the Extracellular side of the membrane; the sequence is LTDLVVDRMG. Residues 418 to 438 traverse the membrane as a helical segment; the sequence is PAGFWMGFIIGLTSAAVLMML. Residues 439 to 457 lie on the Cytoplasmic side of the membrane; it reads RMRYLQRQPSAIILQRAAR.

It belongs to the multi antimicrobial extrusion (MATE) (TC 2.A.66.1) family. MdtK subfamily.

It localises to the cell inner membrane. Its function is as follows. Multidrug efflux pump that functions probably as a Na(+)/drug antiporter. This Salmonella typhimurium (strain LT2 / SGSC1412 / ATCC 700720) protein is Multidrug resistance protein MdtK (mdtK).